Consider the following 127-residue polypeptide: Small ribosomal subunit protein uS11 (127 aa).

It belongs to the universal ribosomal protein uS11 family. As to quaternary structure, part of the 30S ribosomal subunit. Interacts with proteins S7 and S18. Binds to IF-3.

Its function is as follows. Located on the platform of the 30S subunit, it bridges several disparate RNA helices of the 16S rRNA. Forms part of the Shine-Dalgarno cleft in the 70S ribosome. The chain is Small ribosomal subunit protein uS11 from Streptococcus pyogenes serotype M1.